The following is a 109-amino-acid chain: Elicitor peptide 2 (109 aa).

Residues 1-73 constitute a propeptide that is removed on maturation; the sequence is MEKLDKRREE…KDDDVVVLLR (73 aa). Residues 74–88 show a composition bias toward basic and acidic residues; sequence DNKAKSKKRDKEKPS. The segment at 74–109 is disordered; that stretch reads DNKAKSKKRDKEKPSSGRPGQTNSVPNAAIQVYKED.

It belongs to the brassicaceae elicitor peptide family.

Elicitor of plant defense. The polypeptide is Elicitor peptide 2 (PEP2) (Arabidopsis thaliana (Mouse-ear cress)).